The primary structure comprises 441 residues: 4-hydroxybenzoate polyprenyltransferase, mitochondrial (441 aa).

Residues 1-95 constitute a mitochondrion transit peptide; it reads MLRKLTSNSS…TLGELVLRDY (95 aa). 8 helical membrane passes run 129 to 149, 154 to 174, 204 to 224, 225 to 245, 246 to 266, 271 to 291, 322 to 342, and 378 to 398; these read IGSW…APAG, LWTL…GCTI, AWFF…ELNW, YSIV…LMKR, ITHW…LLGW, GSVM…WTIV, LWLS…GMVC, and FISN…GTLY. The interval 405 to 441 is disordered; it reads AGKSSTTSSSSTSSSSSPSSGLLLAATNHHQPARQAS. Residues 408–424 are compositionally biased toward low complexity; sequence SSTTSSSSTSSSSSPSS. Residues 432 to 441 show a composition bias toward polar residues; the sequence is NHHQPARQAS.

This sequence belongs to the UbiA prenyltransferase family. It depends on Mg(2+) as a cofactor.

Its subcellular location is the mitochondrion inner membrane. The enzyme catalyses an all-trans-polyprenyl diphosphate + 4-hydroxybenzoate = a 4-hydroxy-3-(all-trans-polyprenyl)benzoate + diphosphate. The protein operates within cofactor biosynthesis; ubiquinone biosynthesis. Its function is as follows. Catalyzes the prenylation of para-hydroxybenzoate (PHB) with an all-trans polyprenyl group. Mediates the second step in the final reaction sequence of coenzyme Q (CoQ) biosynthesis, which is the condensation of the polyisoprenoid side chain with PHB, generating the first membrane-bound Q intermediate. This chain is 4-hydroxybenzoate polyprenyltransferase, mitochondrial, found in Aedes aegypti (Yellowfever mosquito).